The primary structure comprises 73 residues: Large ribosomal subunit protein bL31 (73 aa).

This sequence belongs to the bacterial ribosomal protein bL31 family. Type A subfamily. In terms of assembly, part of the 50S ribosomal subunit.

Functionally, binds the 23S rRNA. This chain is Large ribosomal subunit protein bL31, found in Allorhizobium ampelinum (strain ATCC BAA-846 / DSM 112012 / S4) (Agrobacterium vitis (strain S4)).